The chain runs to 304 residues: N-acetylglucosaminyl-phosphatidylinositol de-N-acetylase (304 aa).

Residues 1 to 20 (MKMLRRTKVNFSKLLYKITK) lie on the Lumenal side of the membrane. The chain crosses the membrane as a helical span at residues 21 to 38 (LAIVLTILYIYFTPKIVS). The Cytoplasmic segment spans residues 39–304 (RNNASLQHIF…FVNEFDVYTY (266 aa)).

This sequence belongs to the PIGL family.

It is found in the endoplasmic reticulum membrane. The enzyme catalyses a 6-(N-acetyl-alpha-D-glucosaminyl)-1-(1,2-diacyl-sn-glycero-3-phospho)-1D-myo-inositol + H2O = a 6-(alpha-D-glucosaminyl)-1-(1,2-diacyl-sn-glycero-3-phospho)-1D-myo-inositol + acetate. It functions in the pathway glycolipid biosynthesis; glycosylphosphatidylinositol-anchor biosynthesis. Involved in the second step of GPI biosynthesis. De-N-acetylation of N-acetylglucosaminyl-phosphatidylinositol. This chain is N-acetylglucosaminyl-phosphatidylinositol de-N-acetylase (GPI12), found in Saccharomyces cerevisiae (strain ATCC 204508 / S288c) (Baker's yeast).